The primary structure comprises 105 residues: Thioredoxin (105 aa).

Positions 2-105 constitute a Thioredoxin domain; it reads VKQIESKTAF…KLEATINELV (104 aa). An N6-acetyllysine modification is found at Lys3. N6-succinyllysine is present on Lys8. Active-site nucleophile residues include Cys32 and Cys35. Residues Cys32 and Cys35 are joined by a disulfide bond. Lys39 is modified (N6-acetyllysine). An S-nitrosocysteine mark is found at Cys62 and Cys69. Cys73 is modified (S-nitrosocysteine; alternate). Lys94 is modified (N6-acetyllysine; alternate). Lys94 is modified (N6-succinyllysine; alternate).

The protein belongs to the thioredoxin family. In terms of assembly, homodimer; disulfide-linked. Interacts with TXNIP through the redox-active site. Interacts with MAP3K5 and CASP3. In case of infection, interacts with S.typhimurium protein slrP. Interacts with APEX1; the interaction stimulates the FOS/JUN AP-1 DNA-binding activity in a redox-dependent manner. In the fully reduced protein, both Cys-69 and Cys-73 are nitrosylated in response to nitric oxide (NO). When two disulfide bonds are present in the protein, only Cys-73 is nitrosylated. Cys-73 can serve as donor for nitrosylation of target proteins. Post-translationally, in case of infection, ubiquitinated by S.typhimurium protein slrP, leading to its degradation.

The protein resides in the nucleus. It localises to the cytoplasm. The protein localises to the secreted. Its function is as follows. Participates in various redox reactions through the reversible oxidation of its active center dithiol to a disulfide and catalyzes dithiol-disulfide exchange reactions. Plays a role in the reversible S-nitrosylation of cysteine residues in target proteins, and thereby contributes to the response to intracellular nitric oxide. Nitrosylates the active site Cys of CASP3 in response to nitric oxide (NO), and thereby inhibits caspase-3 activity. Induces the FOS/JUN AP-1 DNA-binding activity in ionizing radiation (IR) cells through its oxidation/reduction status and stimulates AP-1 transcriptional activity. In terms of biological role, ADF augments the expression of the interleukin-2 receptor TAC (IL2R/P55). The protein is Thioredoxin (TXN) of Homo sapiens (Human).